Reading from the N-terminus, the 461-residue chain is Armadillo repeat-containing X-linked protein 1 (461 aa).

Residues 1–6 (MGRTRE) lie on the Mitochondrial intermembrane side of the membrane. Mitochondrion outer membrane (MOM)-targeting sequence stretches follow at residues 1 to 6 (MGRTRE) and 26 to 36 (RLTWGKDENEK). The helical; Signal-anchor transmembrane segment at 7–29 (AGCVAAGMVIGAGACYCVYRLTW) threads the bilayer. Over 30-461 (GKDENEKLWD…VKVLKVLTKL (432 aa)) the chain is Cytoplasmic. Disordered regions lie at residues 34–110 (NEKL…HSEG) and 148–192 (SSLP…PATA). Residues 38-51 (WDDEDEEEEEEEES) are compositionally biased toward acidic residues. Residues 96-110 (PDVKKEVYPESHSEG) are compositionally biased toward basic and acidic residues. Positions 167–185 (SRARNRTSGKVKRKNRSKS) are enriched in basic residues. ARM repeat units follow at residues 203-243 (PYKI…NNAA), 245-284 (SFNQ…NLSV), 366-406 (PAMT…NIND), and 423-461 (SSLF…LTKL).

Belongs to the eutherian X-chromosome-specific Armcx family. In terms of assembly, interacts with MIRO1.

The protein localises to the mitochondrion. It localises to the mitochondrion outer membrane. In terms of biological role, regulates mitochondrial transport during axon regeneration. Increases the proportion of motile mitochondria by recruiting stationary mitochondria into the motile pool. Enhances mitochondria movement and neurite growth in both adult axons and embryonic neurons. Promotes neuronal survival and axon regeneration after nerve injury. May link mitochondria to the Trak1-kinesin motor complex via its interaction with MIRO1. This is Armadillo repeat-containing X-linked protein 1 (Armcx1) from Rattus norvegicus (Rat).